Consider the following 675-residue polypeptide: Alpha-1,4-glucan:maltose-1-phosphate maltosyltransferase (675 aa).

Residues Lys256, Gln316, and Asp351 each contribute to the alpha-maltose 1-phosphate site. The active-site Nucleophile is Asp386. Alpha-maltose 1-phosphate is bound at residue Asn387. The active-site Proton donor is the Glu415. 525–526 (KY) is a binding site for alpha-maltose 1-phosphate.

Belongs to the glycosyl hydrolase 13 family. GlgE subfamily. In terms of assembly, homodimer.

It catalyses the reaction alpha-maltose 1-phosphate + [(1-&gt;4)-alpha-D-glucosyl](n) = [(1-&gt;4)-alpha-D-glucosyl](n+2) + phosphate. In terms of biological role, maltosyltransferase that uses maltose 1-phosphate (M1P) as the sugar donor to elongate linear or branched alpha-(1-&gt;4)-glucans. Is involved in a branched alpha-glucan biosynthetic pathway from trehalose, together with TreS, Mak and GlgB. The sequence is that of Alpha-1,4-glucan:maltose-1-phosphate maltosyltransferase from Corynebacterium glutamicum (strain ATCC 13032 / DSM 20300 / JCM 1318 / BCRC 11384 / CCUG 27702 / LMG 3730 / NBRC 12168 / NCIMB 10025 / NRRL B-2784 / 534).